The following is a 464-amino-acid chain: Rab GDP-dissociation inhibitor (464 aa).

The protein belongs to the Rab GDI family. As to quaternary structure, interacts with the GDP-bound form of Rab GTPase YPT7.

Its function is as follows. Regulates the GDP/GTP exchange reaction of YPT7 by inhibiting the dissociation of GDP from it, and the subsequent binding of GTP to YTP7. This is Rab GDP-dissociation inhibitor (GDI1) from Pyricularia oryzae (strain 70-15 / ATCC MYA-4617 / FGSC 8958) (Rice blast fungus).